Here is a 29-residue protein sequence, read N- to C-terminus: U1-pseudomyrmecitoxin-Pt1 subunit SS2 (29 aa).

The protein belongs to the myrmexin family. Heterodimer composed of subunit SS2 and subunit LS1 (U1-PSDTX-Pt1e), and heterodimer composed of subunit SS2 and LS2 (U1-PSDTX-Pt1c); disulfide-linked. Expressed by the venom gland.

It localises to the secreted. In terms of biological role, this heterodimer may have anti-inflammatory properties, since the myrmexin complex (composed of 6 SS-LS heterodimers) inhibits carrageenin-induced edema in a dose-dependent manner (after subcutaneous injection into rats). In Pseudomyrmex triplarinus (Ant), this protein is U1-pseudomyrmecitoxin-Pt1 subunit SS2.